Reading from the N-terminus, the 352-residue chain is Chymopapain (352 aa).

A signal peptide spans 1–18 (MATMSSISKIIFLATCLI). A propeptide spans 19–134 (IHMGLSSADF…EDFTYKHVTN (116 aa)) (activation peptide). The N-linked (GlcNAc...) asparagine glycan is linked to Asn-86. 3 disulfides stabilise this stretch: Cys-156/Cys-197, Cys-190/Cys-229, and Cys-287/Cys-338. The active site involves Cys-159. Residues His-293 and Asn-313 contribute to the active site.

It belongs to the peptidase C1 family.

The catalysed reaction is Specificity similar to that of papain.. Cysteine proteinase with a high level of diversity in substrate specificity. The protein is Chymopapain of Carica papaya (Papaya).